Reading from the N-terminus, the 390-residue chain is Phosphopentomutase (390 aa).

6 residues coordinate Mn(2+): Asp-12, Asp-284, His-289, Asp-325, His-326, and His-337.

Belongs to the phosphopentomutase family. The cofactor is Mn(2+).

Its subcellular location is the cytoplasm. It catalyses the reaction 2-deoxy-alpha-D-ribose 1-phosphate = 2-deoxy-D-ribose 5-phosphate. The catalysed reaction is alpha-D-ribose 1-phosphate = D-ribose 5-phosphate. It participates in carbohydrate degradation; 2-deoxy-D-ribose 1-phosphate degradation; D-glyceraldehyde 3-phosphate and acetaldehyde from 2-deoxy-alpha-D-ribose 1-phosphate: step 1/2. In terms of biological role, isomerase that catalyzes the conversion of deoxy-ribose 1-phosphate (dRib-1-P) and ribose 1-phosphate (Rib-1-P) to deoxy-ribose 5-phosphate (dRib-5-P) and ribose 5-phosphate (Rib-5-P), respectively. In Macrococcus caseolyticus (strain JCSC5402) (Macrococcoides caseolyticum), this protein is Phosphopentomutase.